The following is a 262-amino-acid chain: Mediator of RNA polymerase II transcription subunit 8 (262 aa).

Residues 168–211 (LEEKEMGVKNVITGLKRQLDEGDEEDEEEEEEEEDMQGEEMEVV) adopt a coiled-coil conformation. Residues 183–206 (KRQLDEGDEEDEEEEEEEEDMQGE) are disordered. Over residues 188 to 206 (EGDEEDEEEEEEEEDMQGE) the composition is skewed to acidic residues.

It belongs to the Mediator complex subunit 8 family. Component of the Mediator complex.

It is found in the nucleus. In terms of biological role, component of the Mediator complex, a coactivator involved in the regulated transcription of nearly all RNA polymerase II-dependent genes. Mediator functions as a bridge to convey information from gene-specific regulatory proteins to the basal RNA polymerase II transcription machinery. Mediator is recruited to promoters by direct interactions with regulatory proteins and serves as a scaffold for the assembly of a functional preinitiation complex with RNA polymerase II and the general transcription factors. The polypeptide is Mediator of RNA polymerase II transcription subunit 8 (MED8) (Coccidioides immitis (strain RS) (Valley fever fungus)).